Consider the following 285-residue polypeptide: Small ribosomal subunit protein uS2 (285 aa).

The tract at residues 228–285 (RAGLSADKDAKPEAGAGEPLAEWEQELLSQAAPAAEAEAAPAAEAEAAPAAEAPATEA) is disordered. Over residues 258–285 (AAPAAEAEAAPAAEAEAAPAAEAPATEA) the composition is skewed to low complexity.

This sequence belongs to the universal ribosomal protein uS2 family.

This is Small ribosomal subunit protein uS2 from Rhodococcus erythropolis (strain PR4 / NBRC 100887).